Reading from the N-terminus, the 1588-residue chain is uncharacterized protein (1588 aa).

The segment covering 486 to 495 (RKRLTSKTED) has biased composition (basic and acidic residues). Disordered regions lie at residues 486 to 515 (RKRLTSKTEDDQNQWTRDCQNSGEDKKRRP) and 1146 to 1176 (GGQDNVSDQSENQSENQSLESETSPIVRELN). The span at 498–507 (NQWTRDCQNS) shows a compositional bias: polar residues. Low complexity predominate over residues 1150 to 1169 (NVSDQSENQSENQSLESETS).

It is found in the virion. This is an uncharacterized protein from Acanthamoeba polyphaga (Amoeba).